The primary structure comprises 138 residues: Putative pre-16S rRNA nuclease (138 aa).

Belongs to the YqgF nuclease family.

It is found in the cytoplasm. Could be a nuclease involved in processing of the 5'-end of pre-16S rRNA. In Shigella dysenteriae serotype 1 (strain Sd197), this protein is Putative pre-16S rRNA nuclease.